Consider the following 1841-residue polypeptide: Sucrase-isomaltase, intestinal (1841 aa).

The Cytoplasmic portion of the chain corresponds to 1–12; sequence MAKKKFSALEIS. Residue Ser7 is modified to Phosphoserine; by PKA. Residues 13–32 traverse the membrane as a helical; Signal-anchor for type II membrane protein segment; sequence LIVLFIIVTAIAIALVTVLA. The Lumenal segment spans residues 33 to 1841; that stretch reads TKVPAVEEIK…LDEPIQITWS (1809 aa). The interval 42–81 is disordered; sequence KSPTPTSNSTPTSTPTSTSTPTSTSTPSPGKCPPEQGEPI. Residues 43-70 are compositionally biased toward low complexity; sequence SPTPTSNSTPTSTPTSTSTPTSTSTPSP. Positions 71-120 constitute a P-type 1 domain; sequence GKCPPEQGEPINERINCIPEQHPTKAICEERGCCWRPWNNTVIPWCFFAD. 3 disulfides stabilise this stretch: Cys73–Cys104, Cys87–Cys103, and Cys98–Cys116. The N-linked (GlcNAc...) asparagine glycan is linked to Asn109. Positions 120–1013 are isomaltase; it reads DNHGYNAESI…ELQLNPPNAR (894 aa). The substrate site is built by Asp274 and Asp398. Sulfotyrosine occurs at positions 401 and 410. The N-linked (GlcNAc...) asparagine glycan is linked to Asn464. Catalysis depends on Asp514, which acts as the Nucleophile; for isomaltase activity. Arg599 contacts substrate. The For isomaltase activity role is filled by Asp615. A disulfide bridge links Cys646 with Cys657. His673 serves as a coordination point for substrate. Asn758, Asn765, Asn867, and Asn910 each carry an N-linked (GlcNAc...) asparagine glycan. Positions 936–984 constitute a P-type 2 domain; the sequence is RWCRTFSDNEKFTCYPDVGTATEGTCTQRGCLWQPVSGLSNVPPYYFPP. The interval 1014–1841 is sucrase; it reads IKLPSNPIST…LDEPIQITWS (828 aa). 5 N-linked (GlcNAc...) asparagine glycosylation sites follow: Asn1240, Asn1308, Asn1345, Asn1359, and Asn1373. Residue Tyr1387 is modified to Sulfotyrosine. Asp1399 acts as the Nucleophile; for sucrase activity in catalysis. The active-site For sucrase activity is the Glu1402. An N-linked (GlcNAc...) asparagine glycan is attached at Asn1485. The Proton donor; for sucrase activity role is filled by Asp1512. N-linked (GlcNAc...) asparagine glycosylation is found at Asn1513, Asn1575, Asn1762, and Asn1829.

It belongs to the glycosyl hydrolase 31 family. The resulting sucrase and isomaltase subunits stay associated with one another in a complex by non-covalent linkages. In terms of processing, the precursor is proteolytically cleaved when exposed to pancreatic proteases in the intestinal lumen. Sulfated.

The protein resides in the apical cell membrane. It carries out the reaction Hydrolysis of sucrose and maltose by an alpha-D-glucosidase-type action.. It catalyses the reaction Hydrolysis of (1-&gt;6)-alpha-D-glucosidic linkages in some oligosaccharides produced from starch and glycogen by alpha-amylase, and in isomaltose.. Plays an important role in the final stage of carbohydrate digestion. Isomaltase activity is specific for both alpha-1,4- and alpha-1,6-oligosaccharides. The polypeptide is Sucrase-isomaltase, intestinal (Si) (Rattus norvegicus (Rat)).